The primary structure comprises 325 residues: 4-hydroxy-3-methylbut-2-enyl diphosphate reductase (325 aa).

Residue Cys-13 participates in [4Fe-4S] cluster binding. His-42 and His-76 together coordinate (2E)-4-hydroxy-3-methylbut-2-enyl diphosphate. His-42 and His-76 together coordinate dimethylallyl diphosphate. Residues His-42 and His-76 each contribute to the isopentenyl diphosphate site. Cys-98 is a binding site for [4Fe-4S] cluster. His-126 lines the (2E)-4-hydroxy-3-methylbut-2-enyl diphosphate pocket. A dimethylallyl diphosphate-binding site is contributed by His-126. Position 126 (His-126) interacts with isopentenyl diphosphate. Residue Glu-128 is the Proton donor of the active site. Thr-169 provides a ligand contact to (2E)-4-hydroxy-3-methylbut-2-enyl diphosphate. Position 230 (Cys-230) interacts with [4Fe-4S] cluster. (2E)-4-hydroxy-3-methylbut-2-enyl diphosphate is bound by residues Ser-258, Ser-259, Asn-260, and Ser-306. Positions 258, 259, 260, and 306 each coordinate dimethylallyl diphosphate. 4 residues coordinate isopentenyl diphosphate: Ser-258, Ser-259, Asn-260, and Ser-306.

This sequence belongs to the IspH family. It depends on [4Fe-4S] cluster as a cofactor.

It catalyses the reaction isopentenyl diphosphate + 2 oxidized [2Fe-2S]-[ferredoxin] + H2O = (2E)-4-hydroxy-3-methylbut-2-enyl diphosphate + 2 reduced [2Fe-2S]-[ferredoxin] + 2 H(+). It carries out the reaction dimethylallyl diphosphate + 2 oxidized [2Fe-2S]-[ferredoxin] + H2O = (2E)-4-hydroxy-3-methylbut-2-enyl diphosphate + 2 reduced [2Fe-2S]-[ferredoxin] + 2 H(+). The protein operates within isoprenoid biosynthesis; dimethylallyl diphosphate biosynthesis; dimethylallyl diphosphate from (2E)-4-hydroxy-3-methylbutenyl diphosphate: step 1/1. It functions in the pathway isoprenoid biosynthesis; isopentenyl diphosphate biosynthesis via DXP pathway; isopentenyl diphosphate from 1-deoxy-D-xylulose 5-phosphate: step 6/6. In terms of biological role, catalyzes the conversion of 1-hydroxy-2-methyl-2-(E)-butenyl 4-diphosphate (HMBPP) into a mixture of isopentenyl diphosphate (IPP) and dimethylallyl diphosphate (DMAPP). Acts in the terminal step of the DOXP/MEP pathway for isoprenoid precursor biosynthesis. This is 4-hydroxy-3-methylbut-2-enyl diphosphate reductase from Prosthecochloris aestuarii (strain DSM 271 / SK 413).